We begin with the raw amino-acid sequence, 292 residues long: RNA 5'-monophosphate methyltransferase (292 aa).

A disordered region spans residues 1–20 (MAVPTELHGGSVKETAAEKE). S-adenosyl-L-methionine contacts are provided by residues arginine 46, asparagine 76, aspartate 110, 135–136 (DF), and methionine 164. The region spanning 53–274 (ELLRQLFPES…KQTIETHPIP (222 aa)) is the Bin3-type SAM domain.

The protein belongs to the methyltransferase superfamily. As to quaternary structure, interacts with DICER1; the interaction may be mediated by RNA.

It localises to the cytoplasm. It carries out the reaction a 5'-end 5'-phospho-ribonucleoside-RNA + S-adenosyl-L-methionine = a 5'-end (5'-methylphospho)-ribonucleoside-RNA + S-adenosyl-L-homocysteine. The enzyme catalyses a 5'-end 5'-phospho-ribonucleoside-RNA + 2 S-adenosyl-L-methionine = a 5'-end (5'-bismethylphospho)-ribonucleoside-RNA + 2 S-adenosyl-L-homocysteine. O-methyltransferase that specifically monomethylates 5'-monophosphate of cytoplasmic histidyl tRNA (tRNA(His)), acting as a capping enzyme by protecting tRNA(His) from cleavage by DICER1. Also able, with less efficiently, to methylate the 5' monophosphate of a subset of pre-miRNAs, acting as a negative regulator of miRNA processing. The 5' monophosphate of pre-miRNAs is recognized by DICER1 and is required for pre-miRNAs processing: methylation at this position reduces the processing of pre-miRNAs by DICER1. Was also reported to mediate dimethylation of pre-miR-145; however dimethylation cannot be reproduced by another group which observes a monomethylation of pre-miR-145. The chain is RNA 5'-monophosphate methyltransferase (BCDIN3D) from Pongo abelii (Sumatran orangutan).